We begin with the raw amino-acid sequence, 534 residues long: CAP-Gly domain-containing linker protein 3 (534 aa).

Basic and acidic residues predominate over residues 1 to 16; sequence MTREDLPDSTPEESKL. A disordered region spans residues 1-33; that stretch reads MTREDLPDSTPEESKLPMEFQSPLLEKRRRPVV. 3 ANK repeats span residues 107–148, 150–173, and 187–299; these read TDMT…LRSR, TNMNALHYAAYFDVPELLRTLLKA, and NHGT…KAGT. The region spanning 304-346 is the CAP-Gly 1 domain; the sequence is GTTEFASGQWVGVELDEPDGKNDGSVGGIRYFICPPKQGIFAP. The interval 349 to 391 is disordered; it reads KISKAPDQPPSSVTSTPRTPRVDFSRVTGKGRKEKKATHKKSL. Over residues 358-367 the composition is skewed to low complexity; it reads PSSVTSTPRT. The span at 377 to 390 shows a compositional bias: basic residues; it reads GKGRKEKKATHKKS. The 43-residue stretch at 423–465 folds into the CAP-Gly 2 domain; it reads GKTDFAPGYWFGIELEKPTGKHDGSVFGVRYFTCSAKNGVFAP. The tract at residues 475-534 is goLD; that stretch reads PKDPQTDNNDMKKVHQVTMTQPKRNFTKVRTPKEIASENSMSRILFCCWFPWLLRAEMKS.

Homodimer.

The protein localises to the cytoplasm. Its subcellular location is the golgi apparatus. It localises to the golgi stack. In terms of biological role, functions as a cytoplasmic linker protein. Involved in TGN-endosome dynamics. The protein is CAP-Gly domain-containing linker protein 3 (clip3) of Xenopus laevis (African clawed frog).